A 1203-amino-acid chain; its full sequence is ATP-dependent helicase/nuclease subunit A (1203 aa).

The 469-residue stretch at 4-472 (VKLTPEQNEA…IRLKENFRSR (469 aa)) folds into the UvrD-like helicase ATP-binding domain. 25–32 (ASAGSGKT) contacts ATP. Residues 503–785 (VQGNITDYPV…RVMTFHKSKG (283 aa)) form the UvrD-like helicase C-terminal domain.

Belongs to the helicase family. AddA subfamily. Heterodimer of AddA and AddB/RexB. The cofactor is Mg(2+).

The enzyme catalyses Couples ATP hydrolysis with the unwinding of duplex DNA by translocating in the 3'-5' direction.. It catalyses the reaction ATP + H2O = ADP + phosphate + H(+). Functionally, the heterodimer acts as both an ATP-dependent DNA helicase and an ATP-dependent, dual-direction single-stranded exonuclease. Recognizes the chi site generating a DNA molecule suitable for the initiation of homologous recombination. The AddA nuclease domain is required for chi fragment generation; this subunit has the helicase and 3' -&gt; 5' nuclease activities. The chain is ATP-dependent helicase/nuclease subunit A from Lactococcus lactis subsp. lactis (strain IL1403) (Streptococcus lactis).